A 275-amino-acid polypeptide reads, in one-letter code: Lectin DB58 (275 aa).

An N-terminal signal peptide occupies residues Met1–Ser22. N-linked (GlcNAc...) asparagine glycans are attached at residues Asn34 and Asn101.

It belongs to the leguminous lectin family. Heterodimer, composed of an alpha and a beta subunit derived from a single precursor. Post-translationally, leu-264 is missing in a major portion of the beta subunit, suggesting an origin by sequential removal of amino acids rather than a processing by endoproteolytic cleavage.

Its function is as follows. Metalloglycoprotein, containing Ca, Mg, Mn, and Zn and the carbohydrates galactose, glucosamine, mannose, and fucose. It agglutinates erythrocytes of blood group A1. This chain is Lectin DB58, found in Vigna unguiculata subsp. cylindrica (Horse gram).